The primary structure comprises 407 residues: Enolase-binding protein (407 aa).

Residues 1 to 24 (MALGNALYPLTATVFLCVVGFATS) form the signal peptide. Topologically, residues 25–366 (SNENSRFLIN…FGQAYPGFRN (342 aa)) are extracellular. 4 N-linked (GlcNAc...) asparagine glycosylation sites follow: N52, N78, N161, and N250. A helical transmembrane segment spans residues 367-387 (VAIGAAILFFSVLGVAIIDMI). The Cytoplasmic segment spans residues 388 to 407 (RRTIANRRAKRLHLGKYSRT).

As to quaternary structure, (Microbial infection) Interacts with ENO/enolase from parasites P.berghei and P.falciparum. In terms of tissue distribution, expressed in the female midgut epithelium.

The protein resides in the cell membrane. (Microbial infection) Acts as a receptor for ENO/enolase from parasites P.berghei and P.falciparum. The interaction is involved in the invasion of the mosquito midgut by P.berghei ookinete, but is dispensable for P.falciparum ookinete invasion. The chain is Enolase-binding protein from Anopheles gambiae (African malaria mosquito).